The following is a 430-amino-acid chain: Adenylosuccinate synthetase (430 aa).

Residues 13–19 (GDEGKGK) and 41–43 (GHT) contribute to the GTP site. The active-site Proton acceptor is the D14. Positions 14 and 41 each coordinate Mg(2+). IMP contacts are provided by residues 14–17 (DEGK), 39–42 (NAGH), T130, R144, Q225, T240, and R304. H42 (proton donor) is an active-site residue. 300-306 (ATTGRAR) is a binding site for substrate. GTP is bound by residues R306, 332-334 (KLD), and 414-416 (STG).

It belongs to the adenylosuccinate synthetase family. As to quaternary structure, homodimer. The cofactor is Mg(2+).

It is found in the cytoplasm. The enzyme catalyses IMP + L-aspartate + GTP = N(6)-(1,2-dicarboxyethyl)-AMP + GDP + phosphate + 2 H(+). It participates in purine metabolism; AMP biosynthesis via de novo pathway; AMP from IMP: step 1/2. Its function is as follows. Plays an important role in the de novo pathway of purine nucleotide biosynthesis. Catalyzes the first committed step in the biosynthesis of AMP from IMP. The polypeptide is Adenylosuccinate synthetase (Pseudomonas aeruginosa (strain LESB58)).